The sequence spans 77 residues: Secapin (77 aa).

The N-terminal stretch at 1–32 is a signal peptide; that stretch reads MKNYSKNATHLITVLLFSFVVILLIIPSKCEA. Residues 33–52 constitute a propeptide that is removed on maturation; sequence VSNDMQPLEARSADLVPEPR. Cysteine 61 and cysteine 72 are disulfide-bonded.

Belongs to the secapin family. As to expression, expressed by the venom gland.

It is found in the secreted. Functionally, serine protease inhibitor which exhibits antifibrinolytic, antielastolytic and antimicrobial activities. Displays antimicrobial activity against bacteria and fungi. Likely functions in the innate immune response to microbial infection and possibly in the venom, as an antifibrinolytic agent. Not toxic to mice but does induce slight sedation at higher doses (from 40 mg/kg). At a dose of 80 mg/kg, sedation occurs 15 minutes after injection and is accompanied by piloerection and hypothermia. In Apis mellifera (Honeybee), this protein is Secapin.